The chain runs to 192 residues: MGVHECPAWLWLLLSLVSLPLGLPVPGAPPRLVCDSRVLERYLLEAKEAENVTMGCSESCSLNENITVPDTKVNFYAWKRIEVGQQAVEVWQGLALLSEAVLRGQAVLANSSQPFEPLQLHMDKAISGLRSITTLLRALGAQEAISLPDAASAAPLRTITADTFCKLFRVYSNFLRGKLKLYTGEACRRGDR.

The signal sequence occupies residues 1–27 (MGVHECPAWLWLLLSLVSLPLGLPVPG). Intrachain disulfides connect Cys-34/Cys-187 and Cys-56/Cys-60. An N-linked (GlcNAc...) asparagine glycan is attached at Asn-51. Residues Asn-65 and Asn-110 are each glycosylated (N-linked (GlcNAc...) asparagine). Ser-152 is a glycosylation site (O-linked (GalNAc...) serine).

It belongs to the EPO/TPO family. As to expression, produced by kidney or liver of adult mammals and by liver of fetal or neonatal mammals.

Its subcellular location is the secreted. In terms of biological role, hormone involved in the regulation of erythrocyte proliferation and differentiation and the maintenance of a physiological level of circulating erythrocyte mass. Binds to EPOR leading to EPOR dimerization and JAK2 activation thereby activating specific downstream effectors, including STAT1 and STAT3. In Macaca mulatta (Rhesus macaque), this protein is Erythropoietin (EPO).